Reading from the N-terminus, the 374-residue chain is Transcription factor NF-E2 45 kDa subunit (374 aa).

Disordered regions lie at residues 1 to 21 (MSPC…IPEP) and 40 to 61 (LNAP…GPPP). Residues 1–83 (MSPCPPQQSR…PGFPLPAPPY (83 aa)) form a required for interaction with MAPK8 region. Residues 1–207 (MSPCPPQQSR…PPAETPLALE (207 aa)) form a transactivation domain region. Over residues 48-61 (FEPPAPVPYPGPPP) the composition is skewed to pro residues. 2 consecutive short sequence motifs (PXY motif) follow at residues 61-65 (PPPSY) and 79-83 (PAPPY). The interval 132 to 165 (LSAGPSKPQEDPESDSGLSLNYSDAESLELEGTE) is disordered. Phosphoserine; by MAPK8 is present on Ser158. Phosphoserine; by PKA is present on Ser171. A disordered region spans residues 207–227 (EPSSGPVRAKPTARGEAGSRD). Residues 267–330 (LVRDIRRRGK…EVMRQQLTDL (64 aa)) form the bZIP domain. Residues 269–288 (RDIRRRGKNKVAAQNCRKRK) are basic motif. Residues 292–299 (IVQLEREL) form a leucine-zipper region. Residue Lys369 forms a Glycyl lysine isopeptide (Lys-Gly) (interchain with G-Cter in SUMO); alternate linkage. Lys369 is covalently cross-linked (Glycyl lysine isopeptide (Lys-Gly) (interchain with G-Cter in SUMO1); alternate).

The protein belongs to the bZIP family. CNC subfamily. In terms of assembly, homodimer; can bind DNA as a homodimer. Erythroid transcription activator nuclear factor erythroid-derived 2 (NF-E2), composed of a heterodimer of NFE2 and MAFK, possesses transactivation activity on beta-globin. Also forms high affinity heterodimer with MAFG; the interaction promotes erythropoiesis. Interacts (via the PXY motif 1) with ITCH (via the WW 1 domain); the interaction promotes 'Lys63'-linked ubiquitination of NFE2, translocates it to the cytoplasm and inhibits its transactivation activity. Interacts with KMT2D/MLL2; the interaction promotes transactivation of the beta-globin locus. Interacts with MAPK8 (phosphorylated form); the interaction leads to phosphorylation of NFE2 in undifferentiated cells. Post-translationally, phosphorylated on serine residues. In undifferentiated erythrocytes, phosphorylated by MAPK8 which then leads to ubiquitination and protein degradation. In terms of processing, sumoylated. Sumoylation is required for translocation to nuclear bodies PODs, anchoring to the gene loci, and transactivation of the beta-globin gene. Ubiquitinated mainly by 'Lys63'-linked ubiquitin. Polyubiquitination with 'Lys63'-linked ubiquitin by ITCH retains NFE2 in the cytoplasm preventing its transactivation activity. In undifferentiated erythrocyte, is ubiquitinated after MAPK8-mediatd phosphorylation leading to protein degradation.

Its subcellular location is the nucleus. The protein resides in the cytoplasm. Its function is as follows. Component of the NF-E2 complex essential for regulating erythroid and megakaryocytic maturation and differentiation. Binds to the hypersensitive site 2 (HS2) of the beta-globin control region (LCR). This subunit (NFE2) recognizes the TCAT/C sequence of the AP-1-like core palindrome present in a number of erythroid and megakaryocytic gene promoters. Requires MAFK or other small MAF proteins for binding to the NF-E2 motif. May play a role in all aspects of hemoglobin production from globin and heme synthesis to procurement of iron. This chain is Transcription factor NF-E2 45 kDa subunit (NFE2), found in Bos taurus (Bovine).